The sequence spans 249 residues: Ribonuclease HII (249 aa).

Over residues 1–19 (MAPRPKAPPQPAEPDPALP) the composition is skewed to pro residues. Positions 1 to 31 (MAPRPKAPPQPAEPDPALPRPRGRPPKAGAV) are disordered. Residues 52–240 (APVAGADEVG…VREQQLGLFP (189 aa)) form the RNase H type-2 domain. The a divalent metal cation site is built by D58, E59, and D149.

The protein belongs to the RNase HII family. The cofactor is Mn(2+). Mg(2+) serves as cofactor.

It localises to the cytoplasm. The enzyme catalyses Endonucleolytic cleavage to 5'-phosphomonoester.. Its function is as follows. Endonuclease that specifically degrades the RNA of RNA-DNA hybrids. The sequence is that of Ribonuclease HII from Xanthobacter autotrophicus (strain ATCC BAA-1158 / Py2).